The chain runs to 276 residues: Large ribosomal subunit protein uL2 (276 aa).

Disordered regions lie at residues Ala-35–Gly-55 and Gly-222–Lys-276. Residues Lys-258–Lys-276 are compositionally biased toward basic residues.

It belongs to the universal ribosomal protein uL2 family. As to quaternary structure, part of the 50S ribosomal subunit. Forms a bridge to the 30S subunit in the 70S ribosome.

In terms of biological role, one of the primary rRNA binding proteins. Required for association of the 30S and 50S subunits to form the 70S ribosome, for tRNA binding and peptide bond formation. It has been suggested to have peptidyltransferase activity; this is somewhat controversial. Makes several contacts with the 16S rRNA in the 70S ribosome. The chain is Large ribosomal subunit protein uL2 from Shouchella clausii (strain KSM-K16) (Alkalihalobacillus clausii).